The following is a 795-amino-acid chain: Cyclin-dependent kinase 11B (795 aa).

The span at leucine 17–isoleucine 60 shows a compositional bias: basic and acidic residues. The interval leucine 17 to alanine 412 is disordered. Phosphoserine occurs at positions 47 and 72. Positions glutamate 95–serine 113 are enriched in basic residues. Composition is skewed to basic and acidic residues over residues histidine 114–histidine 131, arginine 138–lysine 227, proline 238–glutamate 253, and glutamine 264–leucine 276. A Phosphoserine modification is found at serine 115. Residue serine 283 is modified to Phosphoserine. The span at serine 291–glycine 302 shows a compositional bias: low complexity. Composition is skewed to acidic residues over residues serine 303–glutamate 364 and glutamate 383–glycine 392. The Protein kinase domain maps to phenylalanine 438–phenylalanine 723. Residues isoleucine 444–valine 452 and lysine 467 each bind ATP. A Phosphoserine; by CDK7 modification is found at serine 482. Threonine 488 carries the phosphothreonine; by CDK7 modification. The active-site Proton acceptor is the aspartate 562. Phosphoserine is present on serine 589. At tyrosine 594 the chain carries Phosphotyrosine. At threonine 595 the chain carries Phosphothreonine. A Glycyl lysine isopeptide (Lys-Gly) (interchain with G-Cter in SUMO2) cross-link involves residue lysine 641. The tract at residues serine 733–phenylalanine 795 is disordered. Threonine 751 is modified (phosphothreonine). At serine 752 the chain carries Phosphoserine.

Belongs to the protein kinase superfamily. CMGC Ser/Thr protein kinase family. CDC2/CDKX subfamily. Cleaved isoform SV9 (p110C) binds to the serine/threonine kinase PAK1 and RANBP9. p110C interacts with RNPS1. Isoform 7, but not isoform SV9, nor its cleavage product p110C, interacts with CCND3. Interacts with CCNL1 and CCNL2. Forms complexes with pre-mRNA-splicing factors, including at least SRSF1, SRSF2 and SRSF7/SLU7. Interacts with isoform 5 of MYO18A. In terms of assembly, (Microbial infection) Interacts with human herpes virus 1 (HHV-1) transcriptional regulator ICP22. It depends on Mg(2+) as a cofactor. During FAS- or TNF-induced apoptosis, isoform SV9 is cleaved by caspases to produce p110C, a fragment that contains the C-terminal kinase domain. In terms of processing, phosphorylation at Ser-115 creates a binding site for 14-3-3 proteins. p110C can be autophosphorylated. In terms of tissue distribution, expressed ubiquitously. Some evidence of isoform-specific tissue distribution.

It is found in the cytoplasm. Its subcellular location is the nucleus. It catalyses the reaction L-seryl-[protein] + ATP = O-phospho-L-seryl-[protein] + ADP + H(+). The catalysed reaction is L-threonyl-[protein] + ATP = O-phospho-L-threonyl-[protein] + ADP + H(+). Phosphorylation at Thr-448 or Tyr-449 inactivates the enzyme, while phosphorylation at Thr-595 activates it. Plays multiple roles in cell cycle progression, cytokinesis and apoptosis. Involved in pre-mRNA splicing in a kinase activity-dependent manner. Isoform 7 may act as a negative regulator of normal cell cycle progression. This is Cyclin-dependent kinase 11B (CDK11B) from Homo sapiens (Human).